Here is an 800-residue protein sequence, read N- to C-terminus: Protein gfi-3 (800 aa).

Residues Glu346–Glu366 adopt a coiled-coil conformation. 2 TPR repeats span residues Ala526–Glu559 and Ile637–Thr670.

As to quaternary structure, the APC/C complex is probably composed of at least 12 subunits: apc-2, apc-10, apc-11, cdc-26, emb-1, emb-27, emb-30, mat-1, mat-2, mat-3, such-1 and gfi-3. As to expression, expressed in gut cells and mature sperm stored in the spermatheca.

The protein operates within protein modification; protein ubiquitination. Its function is as follows. Probable component of the anaphase promoting complex/cyclosome (APC/C), a cell cycle-regulated E3 ubiquitin ligase that controls progression through mitosis and the G1 phase of the cell cycle. The APC/C complex acts by mediating ubiquitination and subsequent degradation of target proteins. Required for the metaphase to anaphase transition in meiosis. In Caenorhabditis elegans, this protein is Protein gfi-3.